The sequence spans 304 residues: Homoserine kinase (304 aa).

An ATP-binding site is contributed by 92–102 (PLARGLGSSAT).

Belongs to the GHMP kinase family. Homoserine kinase subfamily.

The protein resides in the cytoplasm. The catalysed reaction is L-homoserine + ATP = O-phospho-L-homoserine + ADP + H(+). It functions in the pathway amino-acid biosynthesis; L-threonine biosynthesis; L-threonine from L-aspartate: step 4/5. Its function is as follows. Catalyzes the ATP-dependent phosphorylation of L-homoserine to L-homoserine phosphate. In Nostoc punctiforme (strain ATCC 29133 / PCC 73102), this protein is Homoserine kinase.